A 184-amino-acid chain; its full sequence is Large ribosomal subunit protein uL10 (184 aa).

It belongs to the universal ribosomal protein uL10 family. As to quaternary structure, part of the ribosomal stalk of the 50S ribosomal subunit. The N-terminus interacts with L11 and the large rRNA to form the base of the stalk. The C-terminus forms an elongated spine to which L12 dimers bind in a sequential fashion forming a multimeric L10(L12)X complex.

Its function is as follows. Forms part of the ribosomal stalk, playing a central role in the interaction of the ribosome with GTP-bound translation factors. This chain is Large ribosomal subunit protein uL10, found in Gluconobacter oxydans (strain 621H) (Gluconobacter suboxydans).